Consider the following 285-residue polypeptide: Putative hydrolase DDAH2 (285 aa).

The active-site Proton donor is the histidine 171. Catalysis depends on cysteine 276, which acts as the Nucleophile.

Belongs to the DDAH family. Phosphorylated by TBK1. Phosphorylation inhibits the translocation into the mitochondrion upon Sendai viral infection. As to expression, detected in heart, placenta, lung, liver, skeletal muscle, kidney and pancreas, and at very low levels in brain.

It is found in the cytoplasm. The protein resides in the mitochondrion. In terms of biological role, putative hydrolase with unknown substrate. Does not hydrolyze N(G),N(G)-dimethyl-L-arginine (ADMA) which acts as an inhibitor of NOS. In endothelial cells, induces expression of vascular endothelial growth factor (VEGF) via phosphorylation of the transcription factor SP1 by PKA in a process that is independent of NO and NO synthase. Similarly, enhances pancreatic insulin secretion through SP1-mediated transcriptional up-regulation of secretagogin/SCGN, an insulin vesicle docking protein. Upon viral infection, relocates to mitochondria where it promotes mitochondrial fission through activation of DNM1L leading to the inhibition of innate response activation mediated by MAVS. This is Putative hydrolase DDAH2 from Homo sapiens (Human).